We begin with the raw amino-acid sequence, 35 residues long: Kappa-theraphotoxin-Tb1b (35 aa).

3 disulfide bridges follow: C3–C18, C10–C23, and C17–C30.

The protein belongs to the neurotoxin 10 (Hwtx-1) family. 58 subfamily. As to quaternary structure, monomer. Expressed by the venom gland.

The protein localises to the secreted. Functionally, low-affinity blocker of Kv4.2/KCND2 voltage-gated potassium channels. Is presumed to shift the voltage-dependence of channel activation to more depolarized potentials and to bind to the S3-S4 linker region of the voltage sensor domain. The polypeptide is Kappa-theraphotoxin-Tb1b (Theraphosa blondi (Goliath birdeating spider)).